We begin with the raw amino-acid sequence, 196 residues long: Probable DNA-directed RNA polymerase subunit delta (196 aa).

An HTH HARE-type domain is found at 14-81 (LSMIEVAHEI…GDNVWGLRSW (68 aa)). Acidic residues predominate over residues 119 to 150 (DDDDVIDYDDDDPEDEDLDNDYDDEDDDDDEG). Residues 119 to 196 (DDDDVIDYDD…DADLDEENQD (78 aa)) form a disordered region. A compositionally biased stretch (basic and acidic residues) spans 151–161 (SHELKQYTKDL). Composition is skewed to acidic residues over residues 162–176 (DDID…ELAD) and 186–196 (SDADLDEENQD).

This sequence belongs to the RpoE family. RNAP is composed of a core of 2 alpha, a beta and a beta' subunits. The core is associated with a delta subunit and one of several sigma factors.

Functionally, participates in both the initiation and recycling phases of transcription. In the presence of the delta subunit, RNAP displays an increased specificity of transcription, a decreased affinity for nucleic acids, and an increased efficiency of RNA synthesis because of enhanced recycling. This Ligilactobacillus salivarius (strain UCC118) (Lactobacillus salivarius) protein is Probable DNA-directed RNA polymerase subunit delta.